Reading from the N-terminus, the 313-residue chain is MEKSQKQVTRPSNSRREYSKEIPIDLLIEIFSRLSTGDIARCRCVSKIWSSVPRLRDFTELFLKISSARPRILFTFLHNGMVPSYDNEIHAPVRGFLCSKASVYNPSTGECAYPYLELLGLWDILPVDAENLAKKVCVPKVLLASEDFACRVSTLGTEEVCWRMIQCSLPHRPFRDEICIDGVLYYLANCKGKLGILWPVPSGDQSHEVTRSFVLRILEDANKLIWSRTVYTLSFNWKKLVNKSLYIVGMTSGGEIVLSTRHLNYPFYIVYYNPVNNTAAKNEIQFGNIANKKAENSRIYTFIDHVENVEHMD.

One can recognise an F-box domain in the interval 16–65 (REYSKEIPIDLLIEIFSRLSTGDIARCRCVSKIWSSVPRLRDFTELFLKI).

Interacts with SGS3 in cytoplasmic granules.

It is found in the cytoplasmic granule. It carries out the reaction S-ubiquitinyl-[E2 ubiquitin-conjugating enzyme]-L-cysteine + [acceptor protein]-L-lysine = [E2 ubiquitin-conjugating enzyme]-L-cysteine + N(6)-ubiquitinyl-[acceptor protein]-L-lysine.. Its pathway is protein degradation; proteasomal ubiquitin-dependent pathway. The protein operates within protein modification; protein ubiquitination. Its function is as follows. E3 ubiquitin-protein ligase which triggers the ubiquitination and subsequent degradation of SGS3 in response to heat. Involved in the mechanisms necessary for quick response to heat and subsequent heritable transgenerational memory of heat acclimation (global warming) such as early flowering and attenuated immunity; this process includes epigenetic regulation as well as post-transcriptional gene silencing (PTGS). In response to heat, HSFA2 is activated and promotes the expression of REF6 which in turn derepresses HSFA2, thus establishing an inheritable feedback loop able to trigger SGIP1 and subsequent SGIP1-mediated SGS3 degradation; this prevents the biosynthesis of trans-acting siRNA (tasiRNA) and leads to the release of HTT5, which drives early flowering but attenuates immunity. The sequence is that of E3 ubiquitin-protein ligase SGIP1 from Arabidopsis thaliana (Mouse-ear cress).